We begin with the raw amino-acid sequence, 209 residues long: Uracil phosphoribosyltransferase (209 aa).

Residues arginine 79, arginine 104, and 131–139 contribute to the 5-phospho-alpha-D-ribose 1-diphosphate site; that span reads DPMLATGNS. Uracil contacts are provided by residues isoleucine 194 and 199–201; that span reads GDA. Position 200 (aspartate 200) interacts with 5-phospho-alpha-D-ribose 1-diphosphate.

The protein belongs to the UPRTase family. It depends on Mg(2+) as a cofactor.

It catalyses the reaction UMP + diphosphate = 5-phospho-alpha-D-ribose 1-diphosphate + uracil. It participates in pyrimidine metabolism; UMP biosynthesis via salvage pathway; UMP from uracil: step 1/1. Allosterically activated by GTP. In terms of biological role, catalyzes the conversion of uracil and 5-phospho-alpha-D-ribose 1-diphosphate (PRPP) to UMP and diphosphate. This is Uracil phosphoribosyltransferase from Acidovorax ebreus (strain TPSY) (Diaphorobacter sp. (strain TPSY)).